The chain runs to 369 residues: Glutamate 5-kinase (369 aa).

Residue Lys-14 participates in ATP binding. Substrate is bound by residues Ser-56, Asp-143, and Asn-155. ATP contacts are provided by residues 175-176 (SD) and 215-221 (TGGMASK). The PUA domain occupies 277 to 351 (AGKIRLDDGA…GMQTQDLPDG (75 aa)).

It belongs to the glutamate 5-kinase family.

The protein localises to the cytoplasm. It catalyses the reaction L-glutamate + ATP = L-glutamyl 5-phosphate + ADP. The protein operates within amino-acid biosynthesis; L-proline biosynthesis; L-glutamate 5-semialdehyde from L-glutamate: step 1/2. Its function is as follows. Catalyzes the transfer of a phosphate group to glutamate to form L-glutamate 5-phosphate. This Corynebacterium glutamicum (strain ATCC 13032 / DSM 20300 / JCM 1318 / BCRC 11384 / CCUG 27702 / LMG 3730 / NBRC 12168 / NCIMB 10025 / NRRL B-2784 / 534) protein is Glutamate 5-kinase.